Consider the following 398-residue polypeptide: 1-deoxy-D-xylulose 5-phosphate reductoisomerase (398 aa).

Threonine 10, glycine 11, serine 12, isoleucine 13, glycine 36, lysine 37, asparagine 38, and asparagine 124 together coordinate NADPH. Lysine 125 contributes to the 1-deoxy-D-xylulose 5-phosphate binding site. Glutamate 126 lines the NADPH pocket. Aspartate 150 is a Mn(2+) binding site. 1-deoxy-D-xylulose 5-phosphate contacts are provided by serine 151, glutamate 152, serine 186, and histidine 209. Mn(2+) is bound at residue glutamate 152. Glycine 215 is an NADPH binding site. 1-deoxy-D-xylulose 5-phosphate-binding residues include serine 222, asparagine 227, lysine 228, and glutamate 231. Mn(2+) is bound at residue glutamate 231.

The protein belongs to the DXR family. In terms of assembly, homodimer. Mg(2+) is required as a cofactor. The cofactor is Mn(2+).

The catalysed reaction is 2-C-methyl-D-erythritol 4-phosphate + NADP(+) = 1-deoxy-D-xylulose 5-phosphate + NADPH + H(+). Its pathway is isoprenoid biosynthesis; isopentenyl diphosphate biosynthesis via DXP pathway; isopentenyl diphosphate from 1-deoxy-D-xylulose 5-phosphate: step 1/6. Its function is as follows. Catalyzes the NADPH-dependent rearrangement and reduction of 1-deoxy-D-xylulose-5-phosphate (DXP) to 2-C-methyl-D-erythritol 4-phosphate (MEP). The sequence is that of 1-deoxy-D-xylulose 5-phosphate reductoisomerase from Salmonella paratyphi A (strain ATCC 9150 / SARB42).